The primary structure comprises 410 residues: Multifunctional CCA protein (410 aa).

G8 and R11 together coordinate ATP. The CTP site is built by G8 and R11. Residues E21 and D23 each coordinate Mg(2+). Residues R91, R137, and R140 each contribute to the ATP site. Positions 91, 137, and 140 each coordinate CTP. The HD domain maps to 228–329; that stretch reads TGIHSLMTLR…VKLLEQVDAF (102 aa).

This sequence belongs to the tRNA nucleotidyltransferase/poly(A) polymerase family. Bacterial CCA-adding enzyme type 1 subfamily. In terms of assembly, monomer. Can also form homodimers and oligomers. Mg(2+) is required as a cofactor. It depends on Ni(2+) as a cofactor.

It carries out the reaction a tRNA precursor + 2 CTP + ATP = a tRNA with a 3' CCA end + 3 diphosphate. It catalyses the reaction a tRNA with a 3' CCA end + 2 CTP + ATP = a tRNA with a 3' CCACCA end + 3 diphosphate. Its function is as follows. Catalyzes the addition and repair of the essential 3'-terminal CCA sequence in tRNAs without using a nucleic acid template. Adds these three nucleotides in the order of C, C, and A to the tRNA nucleotide-73, using CTP and ATP as substrates and producing inorganic pyrophosphate. tRNA 3'-terminal CCA addition is required both for tRNA processing and repair. Also involved in tRNA surveillance by mediating tandem CCA addition to generate a CCACCA at the 3' terminus of unstable tRNAs. While stable tRNAs receive only 3'-terminal CCA, unstable tRNAs are marked with CCACCA and rapidly degraded. This Legionella pneumophila (strain Lens) protein is Multifunctional CCA protein.